The primary structure comprises 414 residues: WW domain-containing oxidoreductase (414 aa).

Residues 1–23 (MAALRYAGLDDTDSEDELPPGWE) are disordered. T12 is modified (phosphothreonine). Phosphoserine is present on S14. The WW 1 domain occupies 16–49 (DELPPGWEERTTKDGWVYYANHTEEKTQWEHPKT). Y33 is subject to Phosphotyrosine. The short motif at 50–55 (GKRKRV) is the Nuclear localization signal element. The 34-residue stretch at 57 to 90 (GDLPYGWEQETDENGQVFFVDHINKRTTYLDPRL) folds into the WW 2 domain. Positions 125-414 (KVVVVTGANS…IQERLGSQSG (290 aa)) are interaction with MAPT. 131–137 (GANSGIG) is an NADP(+) binding site. The interval 209–273 (CNAATFALPW…RFTDINDSLG (65 aa)) is mediates targeting to the mitochondria. Residue S260 coordinates substrate. Phosphotyrosine; by TNK2 is present on Y287. Y293 functions as the Proton acceptor in the catalytic mechanism.

Belongs to the short-chain dehydrogenases/reductases (SDR) family. Interacts with TP53, p73/TP73 and MAPK8. Interacts with MAPT/TAU, RUNX2 and HYAL2. Forms a ternary complex with TP53 and MDM2. Interacts with ERBB4, LITAF and WBP1. Interacts with DVL1, DVL2 and DVL3. May interact with FAM189B and SCOTIN. Interacts with TNK2. Interacts with TMEM207. Interacts (via WW domain) with VOPP1. Phosphorylated upon genotoxic stress. Phosphorylation of Tyr-33 regulates interaction with TP53, TP73 and MAPK8. May also regulate proapoptotic activity. Phosphorylation by TNK2 is associated with polyubiquitination and degradation. In terms of processing, ubiquitinated when phosphorylated by TNK2, leading to its degradation. In terms of tissue distribution, widely expressed. Strongly expressed in testis, prostate, and ovary. Overexpressed in cancer cell lines. Isoform 5 and isoform 6 may only be expressed in tumor cell lines.

It localises to the cytoplasm. It is found in the nucleus. Its subcellular location is the mitochondrion. The protein resides in the golgi apparatus. The protein localises to the lysosome. Functionally, putative oxidoreductase. Acts as a tumor suppressor and plays a role in apoptosis. Required for normal bone development. May function synergistically with p53/TP53 to control genotoxic stress-induced cell death. Plays a role in TGFB1 signaling and TGFB1-mediated cell death. May also play a role in tumor necrosis factor (TNF)-mediated cell death. Inhibits Wnt signaling, probably by sequestering DVL2 in the cytoplasm. This is WW domain-containing oxidoreductase (WWOX) from Homo sapiens (Human).